The chain runs to 237 residues: tRNA1(Val) (adenine(37)-N6)-methyltransferase (237 aa).

Belongs to the methyltransferase superfamily. tRNA (adenine-N(6)-)-methyltransferase family.

The protein localises to the cytoplasm. The enzyme catalyses adenosine(37) in tRNA1(Val) + S-adenosyl-L-methionine = N(6)-methyladenosine(37) in tRNA1(Val) + S-adenosyl-L-homocysteine + H(+). Functionally, specifically methylates the adenine in position 37 of tRNA(1)(Val) (anticodon cmo5UAC). The protein is tRNA1(Val) (adenine(37)-N6)-methyltransferase of Parabacteroides distasonis (strain ATCC 8503 / DSM 20701 / CIP 104284 / JCM 5825 / NCTC 11152).